Consider the following 623-residue polypeptide: uncharacterized protein (623 aa).

Residues 1 to 18 (MSSRSGSADTFTQRSDSN) show a composition bias toward polar residues. Disordered regions lie at residues 1 to 107 (MSSR…DPFT), 132 to 181 (LGSD…EIGA), 207 to 231 (SWNL…ADTD), 298 to 349 (REET…ESDQ), 384 to 464 (RKSV…DRNV), 533 to 553 (SIND…PPET), and 568 to 623 (VESR…TKGD). Basic and acidic residues predominate over residues 25–34 (ISLDDVRDNN). Residues 39-49 (SSSGISTTGSS) show a composition bias toward low complexity. Residues 132–144 (LGSDTARPTSNGG) are compositionally biased toward polar residues. Positions 165–177 (STSTWGPSGPTTP) are enriched in low complexity. A compositionally biased stretch (polar residues) spans 328–339 (EKSTFSRISEQP). The span at 400 to 417 (QTPTISTASSPIQPSSSP) shows a compositional bias: low complexity. Over residues 533–548 (SINDLQQGTSSSQNQA) the composition is skewed to polar residues. The segment covering 604–614 (PSASPSTSRTR) has biased composition (low complexity).

This is an uncharacterized protein from Emericella nidulans (strain FGSC A4 / ATCC 38163 / CBS 112.46 / NRRL 194 / M139) (Aspergillus nidulans).